Consider the following 351-residue polypeptide: Increased glyphosate resistance protein (351 aa).

Positions 1 to 18 are enriched in basic and acidic residues; the sequence is MHREDDSTSTGRREERLS. Positions 1–29 are disordered; sequence MHREDDSTSTGRREERLSTGKGDSLQPGP.

In terms of biological role, confers an increase in glyphosate resistance when expressed in E.coli. This chain is Increased glyphosate resistance protein, found in Pseudomonas sp. (strain PG2982).